The chain runs to 362 residues: NAD(P)H-quinone oxidoreductase subunit 1, chloroplastic (362 aa).

8 helical membrane-spanning segments follow: residues 29-49 (ILPI…IVWL), 103-123 (IAVI…HFVL), 128-148 (IGVF…LMAG), 164-184 (AAQS…ISLL), 202-222 (FFGW…ISSL), 247-267 (YSGI…LVSS), 303-323 (TMGI…SITI), and 342-362 (FLLP…LVSL).

The protein belongs to the complex I subunit 1 family. In terms of assembly, NDH is composed of at least 16 different subunits, 5 of which are encoded in the nucleus.

It localises to the plastid. The protein localises to the chloroplast thylakoid membrane. The catalysed reaction is a plastoquinone + NADH + (n+1) H(+)(in) = a plastoquinol + NAD(+) + n H(+)(out). It catalyses the reaction a plastoquinone + NADPH + (n+1) H(+)(in) = a plastoquinol + NADP(+) + n H(+)(out). Its function is as follows. NDH shuttles electrons from NAD(P)H:plastoquinone, via FMN and iron-sulfur (Fe-S) centers, to quinones in the photosynthetic chain and possibly in a chloroplast respiratory chain. The immediate electron acceptor for the enzyme in this species is believed to be plastoquinone. Couples the redox reaction to proton translocation, and thus conserves the redox energy in a proton gradient. This is NAD(P)H-quinone oxidoreductase subunit 1, chloroplastic from Hordeum vulgare (Barley).